A 488-amino-acid chain; its full sequence is Wax ester synthase/diacylglycerol acyltransferase 8 (488 aa).

At Met1–Arg195 the chain is on the cytoplasmic side. The active-site Proton acceptor is the His135. A helical transmembrane segment spans residues Leu196–Leu214. Over Lys215–Val488 the chain is Lumenal. N-linked (GlcNAc...) asparagine glycosylation is found at Asn238, Asn252, Asn353, and Asn397.

It in the N-terminal section; belongs to the long-chain O-acyltransferase family. As to expression, mostly expressed in flowers and siliques and at low levels in stems.

Its subcellular location is the cell membrane. It localises to the endoplasmic reticulum membrane. It catalyses the reaction an acyl-CoA + a 1,2-diacyl-sn-glycerol = a triacyl-sn-glycerol + CoA. It carries out the reaction a long chain fatty alcohol + a fatty acyl-CoA = a wax ester + CoA. The protein operates within glycerolipid metabolism; triacylglycerol biosynthesis. It participates in lipid metabolism. Bifunctional wax ester synthase/diacylglycerol acyltransferase. Involved in cuticular wax biosynthesis. The sequence is that of Wax ester synthase/diacylglycerol acyltransferase 8 from Arabidopsis thaliana (Mouse-ear cress).